The chain runs to 485 residues: Cytosol non-specific dipeptidase (485 aa).

A Zn(2+)-binding site is contributed by His76. The active site involves Asp78. Asp115 serves as a coordination point for Zn(2+). The active-site Proton acceptor is the Glu145. The Zn(2+) site is built by Glu146 and Asp169. Residue Lys296 is modified to N6-acetyllysine. His457 lines the Zn(2+) pocket.

It belongs to the peptidase M20C family. Zn(2+) is required as a cofactor. Co(2+) serves as cofactor.

It carries out the reaction Hydrolysis of dipeptides, preferentially hydrophobic dipeptides including prolyl amino acids.. Its activity is regulated as follows. Inhibited by metal chelators. Dipeptidase with broad substrate specificity. Requires dipeptide substrates with an unblocked N-terminus and the amino group in the alpha or beta position. Non-protein amino acids and proline are not accepted in the C-terminal position, whereas some dipeptide amides and formyl amino acids are hydrolyzed. Also shows cysteinylglycinase activity, which is sufficient for E.coli to utilize cysteinylglycine as a cysteine source. This is Cytosol non-specific dipeptidase (pepD) from Escherichia coli (strain K12).